A 201-amino-acid chain; its full sequence is Potassium-transporting ATPase KdpC subunit (201 aa).

Residues Pro-7 to Met-27 traverse the membrane as a helical segment.

The protein belongs to the KdpC family. As to quaternary structure, the system is composed of three essential subunits: KdpA, KdpB and KdpC.

Its subcellular location is the cell inner membrane. Functionally, part of the high-affinity ATP-driven potassium transport (or Kdp) system, which catalyzes the hydrolysis of ATP coupled with the electrogenic transport of potassium into the cytoplasm. This subunit acts as a catalytic chaperone that increases the ATP-binding affinity of the ATP-hydrolyzing subunit KdpB by the formation of a transient KdpB/KdpC/ATP ternary complex. The polypeptide is Potassium-transporting ATPase KdpC subunit (Xanthobacter autotrophicus (strain ATCC BAA-1158 / Py2)).